The chain runs to 576 residues: Interleukin-1 receptor type 1 (576 aa).

The N-terminal stretch at 1–19 (MENMKVLLGFICLIVPLLS) is a signal peptide. Ig-like C2-type domains lie at 20 to 115 (LETD…ITMS), 121 to 217 (PGLC…RVIT), and 229 to 331 (PVIM…VRLV). Topologically, residues 20-338 (LETDKCTEYP…RLVYPVPDFK (319 aa)) are extracellular. 3 disulfide bridges follow: C25–C107, C46–C99, and C145–C199. N63 and N103 each carry an N-linked (GlcNAc...) asparagine glycan. 3 N-linked (GlcNAc...) asparagine glycosylation sites follow: N236, N252, and N266. A disulfide bond links C251 and C315. Residues 339 to 359 (NYLIGGFAIFTATAVFCACIY) form a helical membrane-spanning segment. The Cytoplasmic portion of the chain corresponds to 360-576 (KVFKVDIVLW…LQAETHLPLG (217 aa)). In terms of domain architecture, TIR spans 386–541 (RTYDAYVLYP…RFWKNLRYQM (156 aa)). Residue E473 is part of the active site. Y499 bears the Phosphotyrosine mark. The residue at position 556 (T556) is a Phosphothreonine; by PKC.

Belongs to the interleukin-1 receptor family. The interleukin-1 receptor complex is a heterodimer of IL1R1 and IL1RAP. Interacts with PIK3R1. Interacts with IL1A. Post-translationally, a soluble form (sIL1R1) is probably produced by proteolytic cleavage at the cell surface (shedding). In terms of processing, rapidly phosphorylated on Tyr-499 in response to IL-1, which creates a SH2 binding site for the PI 3-kinase regulatory subunit PIK3R1.

Its subcellular location is the membrane. It localises to the cell membrane. It is found in the secreted. It carries out the reaction NAD(+) + H2O = ADP-D-ribose + nicotinamide + H(+). Receptor for IL1A, IL1B and IL1RN. After binding to interleukin-1 associates with the coreceptor IL1RAP to form the high affinity interleukin-1 receptor complex which mediates interleukin-1-dependent activation of NF-kappa-B, MAPK and other pathways. Signaling involves the recruitment of adapter molecules such as TOLLIP, MYD88, and IRAK1 or IRAK2 via the respective TIR domains of the receptor/coreceptor subunits. Binds ligands with comparable affinity and binding of antagonist IL1RN prevents association with IL1RAP to form a signaling complex. Involved in IL1B-mediated costimulation of IFNG production from T-helper 1 (Th1) cells. The chain is Interleukin-1 receptor type 1 (Il1r1) from Rattus norvegicus (Rat).